The primary structure comprises 60 residues: UPF0337 protein SAV1625 (60 aa).

Residues 18–41 (VGNVTDNKELEKEGQQDKATGKAK) are disordered. Residues 23 to 41 (DNKELEKEGQQDKATGKAK) are compositionally biased toward basic and acidic residues.

The protein belongs to the UPF0337 (CsbD) family.

The polypeptide is UPF0337 protein SAV1625 (Staphylococcus aureus (strain Mu50 / ATCC 700699)).